We begin with the raw amino-acid sequence, 694 residues long: MQTSPDMFINRELSWLRFNSRVLDQCSKNLPLLEKLKFIAIYCTNLDEFYMIRVAGLKQLFSAGVNASSSDEMTPLQQLKAIRKYLHQEKELLERYFNEITSELEKENLFIKHYENLDENLKQKCDEYFFSNIFPVIVPIAVDATHPFPHLNNLSFSLAVKICDKAHPELVKFGMIRIPRVLPRFYEVSANIYVPIESIVHQHAEEIFPGYKLLASAAFRVTRNADMVIEEEEADDFMMILEQGLKLRRKGAFVRLQIQKDADEQIVEFLNTHMKIFHKDVYEYSILLNLPSLWQIAGNKTFTHLLSPLYTPKTLPPFDENLSIFDAVEKEDILIIQPFESFDPVYKFIKEASKDPEVISIRMTLYRVEKNSNIVQALIDAASDGKQVTVMVELKARFDEENNLHWAKALENAGAHVIYGITGFKVHAKVSQVIRKQGDKLKFYMHLSTGNYNASSAKIYTDVSYFTSKAEFARDTTSFFHILSGFSKNRRLQTLSMSPNQIKEKVLEMIRIETSKKNEGVIVAKMNSLVDSDIIQALYEASMEGVQIDLIIRGICCLKPDEEYSKNIRVRSIIGKYLEHARVFYFKHSEPNYFISSADWMPRNLERRLELMTPIYDERSKAKLAQFLRLQLSDNVLAYELKNNGEYEKIPSSEKIIDSQQTLEEYVSKIYKTLKKDTDQSRATHLASKLFKEN.

Asparagine 45 serves as a coordination point for ATP. Positions 367 and 397 each coordinate Mg(2+). Histidine 427 functions as the Phosphohistidine intermediate in the catalytic mechanism. 3 residues coordinate ATP: tyrosine 460, arginine 553, and histidine 580.

Belongs to the polyphosphate kinase 1 (PPK1) family. Mg(2+) is required as a cofactor. Post-translationally, an intermediate of this reaction is the autophosphorylated ppk in which a phosphate is covalently linked to a histidine residue through a N-P bond.

It catalyses the reaction [phosphate](n) + ATP = [phosphate](n+1) + ADP. In terms of biological role, catalyzes the reversible transfer of the terminal phosphate of ATP to form a long-chain polyphosphate (polyP). The polypeptide is Polyphosphate kinase (Campylobacter jejuni subsp. jejuni serotype O:6 (strain 81116 / NCTC 11828)).